We begin with the raw amino-acid sequence, 400 residues long: Enoyl-[acyl-carrier-protein] reductase [NADH] (400 aa).

NAD(+) is bound by residues 48–53 (GSSSGY), 74–75 (FE), 111–112 (DA), and 139–140 (LA). Residue tyrosine 225 coordinates substrate. Tyrosine 235 functions as the Proton donor in the catalytic mechanism. Residues lysine 244 and 273 to 275 (VVT) each bind NAD(+).

Belongs to the TER reductase family. As to quaternary structure, monomer.

It carries out the reaction a 2,3-saturated acyl-[ACP] + NAD(+) = a (2E)-enoyl-[ACP] + NADH + H(+). It participates in lipid metabolism; fatty acid biosynthesis. Its function is as follows. Involved in the final reduction of the elongation cycle of fatty acid synthesis (FAS II). Catalyzes the reduction of a carbon-carbon double bond in an enoyl moiety that is covalently linked to an acyl carrier protein (ACP). The polypeptide is Enoyl-[acyl-carrier-protein] reductase [NADH] (Shewanella frigidimarina (strain NCIMB 400)).